The primary structure comprises 392 residues: Formate-dependent phosphoribosylglycinamide formyltransferase (392 aa).

N(1)-(5-phospho-beta-D-ribosyl)glycinamide contacts are provided by residues 22 to 23 (EL) and Glu82. Residues Arg114, Lys155, 160–165 (SSGKGQ), 195–198 (EGVV), and Glu203 each bind ATP. The 190-residue stretch at 119–308 (RLAAEELQLP…EFALHVRAFL (190 aa)) folds into the ATP-grasp domain. Residues Glu267 and Glu279 each contribute to the Mg(2+) site. N(1)-(5-phospho-beta-D-ribosyl)glycinamide is bound by residues Asp286, Lys355, and 362-363 (RR).

It belongs to the PurK/PurT family. Homodimer.

The catalysed reaction is N(1)-(5-phospho-beta-D-ribosyl)glycinamide + formate + ATP = N(2)-formyl-N(1)-(5-phospho-beta-D-ribosyl)glycinamide + ADP + phosphate + H(+). It participates in purine metabolism; IMP biosynthesis via de novo pathway; N(2)-formyl-N(1)-(5-phospho-D-ribosyl)glycinamide from N(1)-(5-phospho-D-ribosyl)glycinamide (formate route): step 1/1. Involved in the de novo purine biosynthesis. Catalyzes the transfer of formate to 5-phospho-ribosyl-glycinamide (GAR), producing 5-phospho-ribosyl-N-formylglycinamide (FGAR). Formate is provided by PurU via hydrolysis of 10-formyl-tetrahydrofolate. In Shigella boydii serotype 18 (strain CDC 3083-94 / BS512), this protein is Formate-dependent phosphoribosylglycinamide formyltransferase.